A 477-amino-acid chain; its full sequence is Glycogen synthase (477 aa).

Lysine 15 provides a ligand contact to ADP-alpha-D-glucose.

Belongs to the glycosyltransferase 1 family. Bacterial/plant glycogen synthase subfamily.

The enzyme catalyses [(1-&gt;4)-alpha-D-glucosyl](n) + ADP-alpha-D-glucose = [(1-&gt;4)-alpha-D-glucosyl](n+1) + ADP + H(+). It participates in glycan biosynthesis; glycogen biosynthesis. Its function is as follows. Synthesizes alpha-1,4-glucan chains using ADP-glucose. This is Glycogen synthase from Erwinia tasmaniensis (strain DSM 17950 / CFBP 7177 / CIP 109463 / NCPPB 4357 / Et1/99).